The following is a 3391-amino-acid chain: Genome polyprotein (3391 aa).

Residues 1-15 (MNNQRKKAKNTPFNM) form an interaction with host EXOC1 region. Residues 1–101 (MNNQRKKAKN…LNILNRRRRS (101 aa)) lie on the Cytoplasmic side of the membrane. Residues 37–72 (MLQGRGPLKLFMALVAFLRFLTIPPTAGILKRWGTI) are hydrophobic; homodimerization of capsid protein C. The propeptide at 101–114 (SAGMIIMLIPTVMA) is ER anchor for the capsid protein C, removed in mature form by serine protease NS3. A helical membrane pass occupies residues 102–122 (AGMIIMLIPTVMAFHLTTRNG). Over 123–238 (EPHMIVSRQE…GAWKHAQRIE (116 aa)) the chain is Extracellular. A glycan (N-linked (GlcNAc...) asparagine; by host) is linked at Asn-183. The chain crosses the membrane as a helical span at residues 239–259 (TWILRHPGFTIMAAILAYTIG). The Cytoplasmic segment spans residues 260-265 (TTHFQR). A helical membrane pass occupies residues 266–280 (ALIFILLTAVAPSMT). Residues 281 to 725 (MRCIGISNRD…LHQVFGAIYG (445 aa)) are Extracellular-facing. 4 disulfides stabilise this stretch: Cys-283–Cys-310, Cys-340–Cys-401, Cys-354–Cys-385, and Cys-372–Cys-396. Asn-347 carries an N-linked (GlcNAc...) asparagine; by host glycan. The tract at residues 378–391 (DRGWGNGCGLFGKG) is fusion peptide. N-linked (GlcNAc...) asparagine; by host glycosylation is present at Asn-433. 2 disulfide bridges follow: Cys-465–Cys-565 and Cys-582–Cys-613. The helical transmembrane segment at 726 to 746 (AAFSGVSWTMKILIGVIITWI) threads the bilayer. Over 747–752 (GMNSRS) the chain is Cytoplasmic. A helical membrane pass occupies residues 753 to 773 (TSLSVSLVLVGIVTLYLGVMV). Topologically, residues 774-1195 (QADSGCVVSW…MVGATMTDDI (422 aa)) are extracellular. Disulfide bonds link Cys-779/Cys-790, Cys-830/Cys-918, Cys-954/Cys-998, Cys-1055/Cys-1104, Cys-1066/Cys-1088, and Cys-1087/Cys-1091. Residues Asn-905 and Asn-982 are each glycosylated (N-linked (GlcNAc...) asparagine; by host). Asn-1134 carries an N-linked (GlcNAc...) asparagine; by host glycan. A helical transmembrane segment spans residues 1196–1220 (GMGVTYLALLAAFKVRPTFAAGLLL). Topologically, residues 1221 to 1226 (RKLTSK) are cytoplasmic. The helical transmembrane segment at 1227-1245 (ELMMTTIGIVLLSQSTIPE) threads the bilayer. Residues 1246–1269 (TILELTDALALGMMVLKMVRNMEK) are Lumenal-facing. A helical transmembrane segment spans residues 1270–1290 (YQLAVTIMAILCVPNAVILQN). Residue Ala-1291 is a topological domain, cytoplasmic. A helical membrane pass occupies residues 1292–1310 (WKVSCTILAVVSVSPLLLT). At 1311–1317 (SSQQKTD) the chain is on the lumenal side. A helical transmembrane segment spans residues 1318–1338 (WIPLALTIKGLNPTAIFLTTL). Residues 1339 to 1346 (SRTSKKRS) lie on the Cytoplasmic side of the membrane. The chain crosses the membrane as a helical span at residues 1347–1367 (WPLNEAIMAVGMVSILASSLL). Residues 1368-1370 (KND) are Lumenal-facing. The chain crosses the membrane as a helical span at residues 1371–1391 (IPMTGPLVAGGLLTVCYVLTG). Residues 1392 to 1447 (RSADLELERAADVKWEDQAEISGSSPILSITISEDGSMSIKNEEEEQTLTILIRTG) are Cytoplasmic-facing. The interval 1398–1437 (LERAADVKWEDQAEISGSSPILSITISEDGSMSIKNEEEE) is interacts with and activates NS3 protease. Positions 1448–1468 (LLVISGLFPVSIPITAAAWYL) form an intramembrane region, helical. Residues 1469-2147 (WEVKKQRAGV…LSELPETLET (679 aa)) are Cytoplasmic-facing. A Peptidase S7 domain is found at 1476 to 1653 (AGVLWDVPSP…EKSIEDNPEI (178 aa)). Active-site charge relay system; for serine protease NS3 activity residues include His-1526, Asp-1550, and Ser-1610. Residues 1655-1811 (DDIFRKRRLT…QSNAPIIDEE (157 aa)) enclose the Helicase ATP-binding domain. The segment at 1659-1662 (RKRR) is important for RNA-binding. 1668–1675 (LHPGAGKT) is a binding site for ATP. The DEAH box motif lies at 1759-1762 (DEAH). Residues 1821–1988 (SGHEWVTDFK…IIPSMFEPER (168 aa)) form the Helicase C-terminal domain. At Lys-1863 the chain carries N6-acetyllysine; by host. The chain crosses the membrane as a helical span at residues 2148–2168 (LLLLTLLATVTGGIFLFLMSG). The Lumenal portion of the chain corresponds to 2169–2170 (RG). An intramembrane region (helical) is located at residues 2171–2191 (IGKMTLGMCCIITASVLLWYA). Residue Gln-2192 is a topological domain, lumenal. Residues 2193 to 2213 (IQPHWIAASIILEFFLIVLLI) form a helical membrane-spanning segment. Residues 2214–2228 (PEPEKQRTPQDNQLT) lie on the Cytoplasmic side of the membrane. A helical transmembrane segment spans residues 2229 to 2249 (YVVIAILTVVAATMANEMGFL). Topologically, residues 2250–2274 (EKTKKDLGLGSIATQQPESNILDID) are lumenal. An intramembrane region (helical) is located at residues 2275–2295 (LRPASAWTLYAVATTFVTPML). At 2296–2316 (RHSIENSSVNVSLTAIANQAT) the chain is on the lumenal side. N-linked (GlcNAc...) asparagine; by host glycans are attached at residues Asn-2301 and Asn-2305. Positions 2317 to 2337 (VLMGLGKGWPLSKMDIGVPLL) form an intramembrane region, helical. Over 2338 to 2347 (AIGCYSQVNP) the chain is Lumenal. The chain crosses the membrane as a helical span at residues 2348-2368 (ITLTAALLLLVAHYAIIGPGL). Residues 2369 to 2413 (QAKATREAQKRAAAGIMKNPTVDGITVIDLDPIPYDPKFEKQLGQ) are Cytoplasmic-facing. Residues 2414–2434 (VMLLVLCVTQVLMMRTTWALC) form a helical membrane-spanning segment. Topologically, residues 2435 to 2459 (EALTLATGPISTLWEGNPGRFWNTT) are lumenal. The N-linked (GlcNAc...) asparagine; by host glycan is linked to Asn-2457. Residues 2460–2480 (IAVSMANIFRGSYLAGAGLLF) traverse the membrane as a helical segment. The Cytoplasmic portion of the chain corresponds to 2481–3391 (SIMKNTTNTR…REEEEAGVLW (911 aa)). The region spanning 2493-2755 (TGNIGETLGE…DVDLGSGTRN (263 aa)) is the mRNA cap 0-1 NS5-type MT domain. An S-adenosyl-L-methionine-binding site is contributed by Ser-2547. Residue Ser-2547 is modified to Phosphoserine. The For 2'-O-MTase activity role is filled by Lys-2552. The short motif at 2568 to 2571 (VVDL) is the SUMO-interacting motif element. S-adenosyl-L-methionine contacts are provided by Gly-2577, Trp-2578, Thr-2595, Lys-2596, Asp-2622, and Val-2623. Residue Asp-2637 is the For 2'-O-MTase activity of the active site. Ile-2638 contributes to the S-adenosyl-L-methionine binding site. Catalysis depends on for 2'-O-MTase activity residues Lys-2672 and Glu-2708. Tyr-2710 contributes to the S-adenosyl-L-methionine binding site. Zn(2+) contacts are provided by Glu-2929, His-2933, Cys-2938, and Cys-2941. The region spanning 3020-3169 (AMYADDTAGW…PLDDRFASAL (150 aa)) is the RdRp catalytic domain. Zn(2+) contacts are provided by His-3203, Cys-3219, and Cys-3338.

In the N-terminal section; belongs to the class I-like SAM-binding methyltransferase superfamily. mRNA cap 0-1 NS5-type methyltransferase family. In terms of assembly, homodimer. Interacts (via N-terminus) with host EXOC1 (via C-terminus); this interaction results in EXOC1 degradation through the proteasome degradation pathway. Forms heterodimers with envelope protein E in the endoplasmic reticulum and Golgi. As to quaternary structure, homodimer; in the endoplasmic reticulum and Golgi. Interacts with protein prM. Interacts with non-structural protein 1. In terms of assembly, homodimer; Homohexamer when secreted. Interacts with envelope protein E. Interacts with host PRKAA1. Interacts (via N-terminus) with serine protease NS3. As to quaternary structure, forms a heterodimer with serine protease NS3. May form homooligomers. In terms of assembly, forms a heterodimer with NS2B. Interacts with NS4B. Interacts with unphosphorylated RNA-directed RNA polymerase NS5; this interaction stimulates RNA-directed RNA polymerase NS5 guanylyltransferase activity. Interacts with host SHFL. Interacts with host MAVS; this interaction inhibits the synthesis of IFN-beta. Interacts with host SHFL. Interacts with host AUP1; the interaction occurs in the presence of Dengue virus NS4B and induces lipophagy which facilitates production of virus progeny particles. May interact with host SRPRA and SEC61G. As to quaternary structure, interacts with serine protease NS3. In terms of assembly, homodimer. Interacts with host STAT2; this interaction inhibits the phosphorylation of the latter, and, when all viral proteins are present (polyprotein), targets STAT2 for degradation. Interacts with serine protease NS3. Interacts with host PAF1 complex; the interaction may prevent the recruitment of the PAF1 complex to interferon-responsive genes, and thus reduces the immune response. In terms of processing, specific enzymatic cleavages in vivo yield mature proteins. Cleavages in the lumen of endoplasmic reticulum are performed by host signal peptidase, whereas cleavages in the cytoplasmic side are performed by serine protease NS3. Signal cleavage at the 2K-4B site requires a prior NS3 protease-mediated cleavage at the 4A-2K site. Cleaved in post-Golgi vesicles by a host furin, releasing the mature small envelope protein M, and peptide pr. This cleavage is incomplete as up to 30% of viral particles still carry uncleaved prM. Post-translationally, N-glycosylated. In terms of processing, N-glycosylated. The excreted form is glycosylated and this is required for efficient secretion of the protein from infected cells. Acetylated by host KAT5. Acetylation modulates NS3 RNA-binding and unwinding activities and plays an important positive role for viral replication. Post-translationally, phosphorylated on serines residues. This phosphorylation may trigger NS5 nuclear localization. In terms of processing, sumoylation of RNA-directed RNA polymerase NS5 increases NS5 protein stability allowing proper viral RNA replication.

The protein localises to the virion. It localises to the host nucleus. The protein resides in the host cytoplasm. Its subcellular location is the host perinuclear region. It is found in the secreted. The protein localises to the virion membrane. It localises to the host endoplasmic reticulum membrane. The protein resides in the host mitochondrion. It carries out the reaction Selective hydrolysis of -Xaa-Xaa-|-Yaa- bonds in which each of the Xaa can be either Arg or Lys and Yaa can be either Ser or Ala.. The enzyme catalyses RNA(n) + a ribonucleoside 5'-triphosphate = RNA(n+1) + diphosphate. It catalyses the reaction a ribonucleoside 5'-triphosphate + H2O = a ribonucleoside 5'-diphosphate + phosphate + H(+). The catalysed reaction is ATP + H2O = ADP + phosphate + H(+). It carries out the reaction a 5'-end (5'-triphosphoguanosine)-ribonucleoside in mRNA + S-adenosyl-L-methionine = a 5'-end (N(7)-methyl 5'-triphosphoguanosine)-ribonucleoside in mRNA + S-adenosyl-L-homocysteine. The enzyme catalyses a 5'-end (N(7)-methyl 5'-triphosphoguanosine)-ribonucleoside in mRNA + S-adenosyl-L-methionine = a 5'-end (N(7)-methyl 5'-triphosphoguanosine)-(2'-O-methyl-ribonucleoside) in mRNA + S-adenosyl-L-homocysteine + H(+). In terms of biological role, plays a role in virus budding by binding to the cell membrane and gathering the viral RNA into a nucleocapsid that forms the core of a mature virus particle. During virus entry, may induce genome penetration into the host cytoplasm after hemifusion induced by the surface proteins. Can migrate to the cell nucleus where it modulates host functions. Overcomes the anti-viral effects of host EXOC1 by sequestering and degrading the latter through the proteasome degradation pathway. Inhibits RNA silencing by interfering with host Dicer. Its function is as follows. Prevents premature fusion activity of envelope proteins in trans-Golgi by binding to envelope protein E at pH6.0. After virion release in extracellular space, gets dissociated from E dimers. Functionally, acts as a chaperone for envelope protein E during intracellular virion assembly by masking and inactivating envelope protein E fusion peptide. prM is the only viral peptide matured by host furin in the trans-Golgi network probably to avoid catastrophic activation of the viral fusion activity in acidic Golgi compartment prior to virion release. prM-E cleavage is inefficient, and many virions are only partially matured. These uncleaved prM would play a role in immune evasion. In terms of biological role, may play a role in virus budding. Exerts cytotoxic effects by activating a mitochondrial apoptotic pathway through M ectodomain. May display a viroporin activity. Binds to host cell surface receptor and mediates fusion between viral and cellular membranes. Envelope protein is synthesized in the endoplasmic reticulum in the form of heterodimer with protein prM. They play a role in virion budding in the ER, and the newly formed immature particle is covered with 60 spikes composed of heterodimer between precursor prM and envelope protein E. The virion is transported to the Golgi apparatus where the low pH causes dissociation of PrM-E heterodimers and formation of E homodimers. prM-E cleavage is inefficient, and many virions are only partially matured. These uncleaved prM would play a role in immune evasion. Its function is as follows. Involved in immune evasion, pathogenesis and viral replication. Once cleaved off the polyprotein, is targeted to three destinations: the viral replication cycle, the plasma membrane and the extracellular compartment. Essential for viral replication. Required for formation of the replication complex and recruitment of other non-structural proteins to the ER-derived membrane structures. Excreted as a hexameric lipoparticle that plays a role against host immune response. Antagonizing the complement function. Binds to the host macrophages and dendritic cells. Inhibits signal transduction originating from Toll-like receptor 3 (TLR3). Mediates complement activation, which may contribute to the pathogenesis of the vascular leakage that occurs in severe dengue disease. Activates autophagy through the AMPK/ERK/mTOR signaling pathway. Mechanistically, acts as the assembly platform for STK11-AMPK interactions and promotes STK11-AMPK interactions. In turn, promotes phosphorylation of the AMPK kinase structural domain and activates AMPK, thereby positively regulating the AMPK/ERK/mTOR signaling pathway and inducing autophagy. Functionally, disrupts the host endothelial glycocalyx layer of host pulmonary microvascular endothelial cells, inducing degradation of sialic acid and shedding of heparan sulfate proteoglycans. NS1 induces expression of sialidases, heparanase, and activates cathepsin L, which activates heparanase via enzymatic cleavage. These effects are probably linked to the endothelial hyperpermeability observed in severe dengue disease. In terms of biological role, component of the viral RNA replication complex that functions in virion assembly and antagonizes the host immune response. Required cofactor for the serine protease function of NS3. May have membrane-destabilizing activity and form viroporins. Its function is as follows. Displays three enzymatic activities: serine protease, NTPase and RNA helicase. NS3 serine protease, in association with NS2B, performs its autocleavage and cleaves the polyprotein at dibasic sites in the cytoplasm: C-prM, NS2A-NS2B, NS2B-NS3, NS3-NS4A, NS4A-2K and NS4B-NS5. NS3 RNA helicase binds RNA and unwinds dsRNA in the 3' to 5' direction. Functionally, regulates the ATPase activity of the NS3 helicase activity. NS4A allows NS3 helicase to conserve energy during unwinding. Plays a role in the inhibition of the host innate immune response. Interacts with host MAVS and thereby prevents the interaction between RIGI and MAVS. In turn, IFN-beta production is impaired. Interacts with host AUP1 which mediates induction of lipophagy in host cells and facilitates production of virus progeny particles. In terms of biological role, functions as a signal peptide for NS4B and is required for the interferon antagonism activity of the latter. Induces the formation of ER-derived membrane vesicles where the viral replication takes place. Inhibits interferon (IFN)-induced host STAT1 phosphorylation and nuclear translocation, thereby preventing the establishment of cellular antiviral state by blocking the IFN-alpha/beta pathway. Its function is as follows. Replicates the viral (+) and (-) RNA genome, and performs the capping of genomes in the cytoplasm. NS5 methylates viral RNA cap at guanine N-7 and ribose 2'-O positions. Besides its role in RNA genome replication, also prevents the establishment of cellular antiviral state by blocking the interferon-alpha/beta (IFN-alpha/beta) signaling pathway. Inhibits host TYK2 and STAT2 phosphorylation, thereby preventing activation of JAK-STAT signaling pathway. May reduce immune responses by preventing the recruitment of the host PAF1 complex to interferon-responsive genes. The sequence is that of Genome polyprotein from Aedimorphus (Red guenon).